We begin with the raw amino-acid sequence, 434 residues long: uncharacterized protein (434 aa).

The signal sequence occupies residues 1–17; that stretch reads MTFLLFQLLVLLRYSIG. 12 helical membrane-spanning segments follow: residues 48 to 68, 70 to 90, 112 to 132, 141 to 161, 173 to 193, 206 to 226, 232 to 252, 271 to 291, 305 to 325, 344 to 364, 380 to 400, and 404 to 424; these read AAISLDFIFIVFPMLLFFTVL, EWVYHGTGLLSLLVLILSVTA, YRVALMLITCLCILAVDFTIF, TYGTSLMDLGVGSFVLANAVV, WITGIKATAPLLLLGFIRLVT, YGVHWNFFFTLAAISILTSFV, YCGLLGFAVLAGYQTWLLSGL, EGVYSILGYWGMYLLGVHLGY, TSSIARVFLVSLLLWIVTILF, WVLAQDLQALGIFMLSSYIPL, ATFLLANLVTGMVNLTVDTIF, and FSSLLILTAYAFALSAIIGTI.

The protein localises to the membrane. This is an uncharacterized protein from Arabidopsis thaliana (Mouse-ear cress).